The chain runs to 277 residues: Caspase-3 (277 aa).

M1 carries the post-translational modification N-acetylmethionine. 2 consecutive propeptides follow at residues 1–9 (MENTENSVD) and 10–28 (SKSI…KSVD). Residue K11 is modified to N6-acetyllysine. A Phosphoserine modification is found at S26. Residues H121 and C163 contribute to the active site. Position 163 is an S-nitrosocysteine; in inhibited form (C163).

The protein belongs to the peptidase C14A family. As to quaternary structure, heterotetramer that consists of two anti-parallel arranged heterodimers, each one formed by a 17 kDa (p17) and a 12 kDa (p12) subunit. Interacts with BIRC6/bruce. Cleavage by granzyme B, caspase-6, caspase-8 and caspase-10 generates the two active subunits. Additional processing of the propeptides is likely due to the autocatalytic activity of the activated protease. Active heterodimers between the small subunit of caspase-7 protease and the large subunit of caspase-3 also occur and vice versa. In terms of processing, S-nitrosylated on its catalytic site cysteine in unstimulated cell lines and denitrosylated upon activation of the Fas apoptotic pathway, associated with an increase in intracellular caspase activity. Fas therefore activates caspase-3 not only by inducing the cleavage of the caspase zymogen to its active subunits, but also by stimulating the denitrosylation of its active site thiol. Post-translationally, ubiquitinated by BIRC6; this activity is inhibited by DIABLO/SMAC.

The protein resides in the cytoplasm. The enzyme catalyses Strict requirement for an Asp residue at positions P1 and P4. It has a preferred cleavage sequence of Asp-Xaa-Xaa-Asp-|- with a hydrophobic amino-acid residue at P2 and a hydrophilic amino-acid residue at P3, although Val or Ala are also accepted at this position.. With respect to regulation, inhibited by BIRC6; following inhibition of BIRC6-caspase binding by DIABLO/SMAC, BIRC6 is subjected to caspase cleavage, leading to an increase in active caspases. Involved in the activation cascade of caspases responsible for apoptosis execution. At the onset of apoptosis, it proteolytically cleaves poly(ADP-ribose) polymerase PARP1 at a '216-Asp-|-Gly-217' bond. Cleaves and activates sterol regulatory element binding proteins (SREBPs) between the basic helix-loop-helix leucine zipper domain and the membrane attachment domain. Cleaves and activates caspase-6, -7 and -9 (CASP6, CASP7 and CASP9, respectively). Cleaves and inactivates interleukin-18 (IL18). Triggers cell adhesion in sympathetic neurons through RET cleavage. Cleaves IL-1 beta between an Asp and an Ala, releasing the mature cytokine which is involved in a variety of inflammatory processes. Cleaves and inhibits serine/threonine-protein kinase AKT1 in response to oxidative stress. Acts as an inhibitor of type I interferon production during virus-induced apoptosis by mediating cleavage of antiviral proteins CGAS, IRF3 and MAVS, thereby preventing cytokine overproduction. Also involved in pyroptosis by mediating cleavage and activation of gasdermin-E (GSDME). Cleaves XRCC4 and phospholipid scramblase proteins XKR4, XKR8 and XKR9, leading to promote phosphatidylserine exposure on apoptotic cell surface. Cleaves BIRC6 following inhibition of BIRC6-caspase binding by DIABLO/SMAC. The chain is Caspase-3 (CASP3) from Macaca fascicularis (Crab-eating macaque).